The sequence spans 402 residues: 1-deoxy-D-xylulose 5-phosphate reductoisomerase (402 aa).

NADPH-binding residues include T21, G22, S23, I24, G47, N50, and N127. K128 is a 1-deoxy-D-xylulose 5-phosphate binding site. E129 contributes to the NADPH binding site. Mn(2+) is bound at residue D151. Positions 152, 153, 177, and 200 each coordinate 1-deoxy-D-xylulose 5-phosphate. E153 provides a ligand contact to Mn(2+). G206 contributes to the NADPH binding site. 1-deoxy-D-xylulose 5-phosphate-binding residues include S213, N218, K219, and E222. A Mn(2+)-binding site is contributed by E222.

It belongs to the DXR family. Requires Mg(2+) as cofactor. The cofactor is Mn(2+).

It catalyses the reaction 2-C-methyl-D-erythritol 4-phosphate + NADP(+) = 1-deoxy-D-xylulose 5-phosphate + NADPH + H(+). Its pathway is isoprenoid biosynthesis; isopentenyl diphosphate biosynthesis via DXP pathway; isopentenyl diphosphate from 1-deoxy-D-xylulose 5-phosphate: step 1/6. Catalyzes the NADPH-dependent rearrangement and reduction of 1-deoxy-D-xylulose-5-phosphate (DXP) to 2-C-methyl-D-erythritol 4-phosphate (MEP). The sequence is that of 1-deoxy-D-xylulose 5-phosphate reductoisomerase from Mycobacterium ulcerans (strain Agy99).